The primary structure comprises 204 residues: Holliday junction branch migration complex subunit RuvA (204 aa).

The tract at residues 1 to 64 is domain I; it reads MFAFLRGELV…EDLQQLFGFL (64 aa). Residues 65–143 form a domain II region; the sequence is DEEELQLFRL…KIQPTSSAKA (79 aa). The segment at 144–151 is flexible linker; it reads GAPSAVLS. Positions 151–204 are domain III; that stretch reads SATQLIDDAVAALTTLGFPKASAQKAVSKVLETTPGLSVEELVRTSLAAMHNNL.

The protein belongs to the RuvA family. In terms of assembly, homotetramer. Forms an RuvA(8)-RuvB(12)-Holliday junction (HJ) complex. HJ DNA is sandwiched between 2 RuvA tetramers; dsDNA enters through RuvA and exits via RuvB. An RuvB hexamer assembles on each DNA strand where it exits the tetramer. Each RuvB hexamer is contacted by two RuvA subunits (via domain III) on 2 adjacent RuvB subunits; this complex drives branch migration. In the full resolvosome a probable DNA-RuvA(4)-RuvB(12)-RuvC(2) complex forms which resolves the HJ.

The protein resides in the cytoplasm. In terms of biological role, the RuvA-RuvB-RuvC complex processes Holliday junction (HJ) DNA during genetic recombination and DNA repair, while the RuvA-RuvB complex plays an important role in the rescue of blocked DNA replication forks via replication fork reversal (RFR). RuvA specifically binds to HJ cruciform DNA, conferring on it an open structure. The RuvB hexamer acts as an ATP-dependent pump, pulling dsDNA into and through the RuvAB complex. HJ branch migration allows RuvC to scan DNA until it finds its consensus sequence, where it cleaves and resolves the cruciform DNA. The polypeptide is Holliday junction branch migration complex subunit RuvA (Chlorobaculum parvum (strain DSM 263 / NCIMB 8327) (Chlorobium vibrioforme subsp. thiosulfatophilum)).